The primary structure comprises 479 residues: Chromosomal replication initiator protein DnaA (479 aa).

The segment at 1–94 (MKGGTMVENA…QTLWRTERED (94 aa)) is domain I, interacts with DnaA modulators. The segment at 94–142 (DIKGVELQVKRGLPEVSMGDAEDGEDGSGEGHELATQAAAPESRSDLAV) is domain II. The tract at residues 106–137 (LPEVSMGDAEDGEDGSGEGHELATQAAAPESR) is disordered. The segment at 143-359 (PLDPRFTFDT…GALNRLIAHA (217 aa)) is domain III, AAA+ region. ATP-binding residues include Gly-188, Gly-190, Lys-191, and Thr-192. A domain IV, binds dsDNA region spans residues 360–479 (DLVGRPVTLD…VELLRRMLEG (120 aa)).

The protein belongs to the DnaA family. In terms of assembly, oligomerizes as a right-handed, spiral filament on DNA at oriC.

It localises to the cytoplasm. Its function is as follows. Plays an essential role in the initiation and regulation of chromosomal replication. ATP-DnaA binds to the origin of replication (oriC) to initiate formation of the DNA replication initiation complex once per cell cycle. Binds the DnaA box (a 9 base pair repeat at the origin) and separates the double-stranded (ds)DNA. Forms a right-handed helical filament on oriC DNA; dsDNA binds to the exterior of the filament while single-stranded (ss)DNA is stabiized in the filament's interior. The ATP-DnaA-oriC complex binds and stabilizes one strand of the AT-rich DNA unwinding element (DUE), permitting loading of DNA polymerase. After initiation quickly degrades to an ADP-DnaA complex that is not apt for DNA replication. Binds acidic phospholipids. This is Chromosomal replication initiator protein DnaA from Gluconobacter oxydans (strain 621H) (Gluconobacter suboxydans).